The primary structure comprises 357 residues: Glycerol-3-phosphate dehydrogenase [NAD(P)+] (357 aa).

NADPH contacts are provided by serine 30, phenylalanine 31, arginine 51, and lysine 124. 2 residues coordinate sn-glycerol 3-phosphate: lysine 124 and glycine 152. Residue alanine 156 participates in NADPH binding. Positions 207, 260, 270, 271, and 272 each coordinate sn-glycerol 3-phosphate. The active-site Proton acceptor is lysine 207. Residue arginine 271 participates in NADPH binding. Residue glutamate 297 coordinates NADPH.

It belongs to the NAD-dependent glycerol-3-phosphate dehydrogenase family.

It is found in the cytoplasm. The catalysed reaction is sn-glycerol 3-phosphate + NAD(+) = dihydroxyacetone phosphate + NADH + H(+). It carries out the reaction sn-glycerol 3-phosphate + NADP(+) = dihydroxyacetone phosphate + NADPH + H(+). It functions in the pathway membrane lipid metabolism; glycerophospholipid metabolism. In terms of biological role, catalyzes the reduction of the glycolytic intermediate dihydroxyacetone phosphate (DHAP) to sn-glycerol 3-phosphate (G3P), the key precursor for phospholipid synthesis. This chain is Glycerol-3-phosphate dehydrogenase [NAD(P)+], found in Acinetobacter baumannii (strain AB307-0294).